The chain runs to 466 residues: Collagenase 3 (466 aa).

Residues 1–13 (ATFFLLSWTHCWS) form the signal peptide. Residues 14 to 98 (LPLPYGDDDD…PRCGVPDVGV (85 aa)) constitute a propeptide, activation peptide. Positions 89–96 (PRCGVPDV) match the Cysteine switch motif. Cysteine 91 serves as a coordination point for Zn(2+). Asparagine 112 carries an N-linked (GlcNAc...) asparagine glycan. A Ca(2+)-binding site is contributed by aspartate 123. N-linked (GlcNAc...) asparagine glycosylation occurs at asparagine 147. Aspartate 157 contributes to the Ca(2+) binding site. Histidine 167 and aspartate 169 together coordinate Zn(2+). Residues 171–241 (YPFDGPSGLL…GALMFPIYTY (71 aa)) are interaction with TIMP2. Ca(2+)-binding residues include aspartate 174, glycine 175, serine 177, and leucine 179. Histidine 182 provides a ligand contact to Zn(2+). 3 residues coordinate Ca(2+): asparagine 189, glycine 191, and aspartate 193. Histidine 195 serves as a coordination point for Zn(2+). Residues aspartate 197, aspartate 198, and glutamate 200 each coordinate Ca(2+). Histidine 217 contributes to the Zn(2+) binding site. Residue glutamate 218 is part of the active site. Residues histidine 221, histidine 227, and methionine 235 each contribute to the Zn(2+) site. Residues 258 to 279 (QSLYGPGDEDPNPKHPKTPEKC) form a disordered region. The segment at 263 to 466 (PGDEDPNPKH…VMPTNSLLWC (204 aa)) is interaction with collagen. A compositionally biased stretch (basic and acidic residues) spans 268 to 279 (PNPKHPKTPEKC). Hemopexin repeat units follow at residues 276–325 (PEKC…WPEL), 326–372 (PNHV…GFPK), 374–422 (VKRL…FPGI), and 423–466 (GDKV…LLWC). The cysteines at positions 279 and 466 are disulfide-linked. Ca(2+) contacts are provided by aspartate 286, isoleucine 288, aspartate 330, and alanine 332. Tyrosine 361 carries the post-translational modification Phosphotyrosine; by PKDCC. Serine 378 and alanine 380 together coordinate Ca(2+). Asparagine 404 carries N-linked (GlcNAc...) asparagine glycosylation. Ca(2+) contacts are provided by aspartate 427 and valine 429.

This sequence belongs to the peptidase M10A family. The cofactor is Ca(2+). Zn(2+) is required as a cofactor. In terms of processing, the proenzyme is activated by removal of the propeptide; this cleavage can be effected by other matrix metalloproteinases, such as MMP2, MMP3 and MMP14 and may involve several cleavage steps. Cleavage can also be autocatalytic, after partial maturation by another protease or after treatment with 4-aminophenylmercuric acetate (APMA) (in vitro). Post-translationally, N-glycosylated. Tyrosine phosphorylated by PKDCC/VLK.

Its subcellular location is the secreted. It is found in the extracellular space. It localises to the extracellular matrix. In terms of biological role, plays a role in the degradation of extracellular matrix proteins including fibrillar collagen, fibronectin, TNC and ACAN. Cleaves triple helical collagens, including type I, type II and type III collagen, but has the highest activity with soluble type II collagen. Can also degrade collagen type IV, type XIV and type X. May also function by activating or degrading key regulatory proteins, such as TGFB1 and CCN2. Plays a role in wound healing, tissue remodeling, cartilage degradation, bone development, bone mineralization and ossification. Required for normal embryonic bone development and ossification. Plays a role in the healing of bone fractures via endochondral ossification. Plays a role in wound healing, probably by a mechanism that involves proteolytic activation of TGFB1 and degradation of CCN2. Plays a role in keratinocyte migration during wound healing. May play a role in cell migration and in tumor cell invasion. In Rattus norvegicus (Rat), this protein is Collagenase 3 (Mmp13).